We begin with the raw amino-acid sequence, 556 residues long: Urocanate hydratase (556 aa).

Residues 52–53 (GG), Gln-130, 176–178 (GMG), Glu-196, Arg-201, 242–243 (NA), 263–267 (QTSAH), 273–274 (YL), and Tyr-322 contribute to the NAD(+) site. Residue Cys-410 is part of the active site. Gly-492 contacts NAD(+).

This sequence belongs to the urocanase family. It depends on NAD(+) as a cofactor.

It is found in the cytoplasm. The catalysed reaction is 4-imidazolone-5-propanoate = trans-urocanate + H2O. The protein operates within amino-acid degradation; L-histidine degradation into L-glutamate; N-formimidoyl-L-glutamate from L-histidine: step 2/3. Its function is as follows. Catalyzes the conversion of urocanate to 4-imidazolone-5-propionate. This Acidiphilium cryptum (strain JF-5) protein is Urocanate hydratase.